Consider the following 247-residue polypeptide: Segregation and condensation protein A (247 aa).

It belongs to the ScpA family. As to quaternary structure, component of a cohesin-like complex composed of ScpA, ScpB and the Smc homodimer, in which ScpA and ScpB bind to the head domain of Smc. The presence of the three proteins is required for the association of the complex with DNA.

It localises to the cytoplasm. In terms of biological role, participates in chromosomal partition during cell division. May act via the formation of a condensin-like complex containing Smc and ScpB that pull DNA away from mid-cell into both cell halves. This is Segregation and condensation protein A from Caldanaerobacter subterraneus subsp. tengcongensis (strain DSM 15242 / JCM 11007 / NBRC 100824 / MB4) (Thermoanaerobacter tengcongensis).